Consider the following 708-residue polypeptide: Leukotoxin translocation ATP-binding protein LktB (708 aa).

In terms of domain architecture, Peptidase C39 spans 1–126; it reads MEANHQRNDL…ACYQGQLILV (126 aa). Residues 155 to 437 form the ABC transmembrane type-1 domain; it reads FLETLIVSIF…LAQLWQDFQQ (283 aa). 5 consecutive transmembrane segments (helical) span residues 159–179, 192–212, 270–290, 296–316, and 389–409; these read LIVSIFLQIFALITPLFFQVV, LNIITVALAIVIIFEIVLSGL, ALTSVLDLLFSFIFFAVMWYY, LVILGSLPCYILWSIFISPIL, and VMVINLWLGAHLVISGDLSIG. The ABC transporter domain maps to 469 to 704; that stretch reads ISFKNIRFRY…SNGLYSYLHQ (236 aa). 503–510 contacts ATP; the sequence is GRSGSGKS.

The protein belongs to the ABC transporter superfamily. Protein-1 exporter (TC 3.A.1.109) family. In terms of assembly, homodimer.

It is found in the cell inner membrane. It catalyses the reaction ATP + H2O + proteinSide 1 = ADP + phosphate + proteinSide 2.. Functionally, part of the ABC transporter complex LktBD involved in leukotoxin export. Transmembrane domains (TMD) form a pore in the inner membrane and the ATP-binding domain (NBD) is responsible for energy generation. This is Leukotoxin translocation ATP-binding protein LktB (lktB) from Mannheimia haemolytica (Pasteurella haemolytica).